The primary structure comprises 602 residues: Probable ATP-dependent RNA helicase ddx18 (602 aa).

Residues M1–S31 are compositionally biased toward low complexity. Residues M1–S108 are disordered. Over residues L50–K63 the composition is skewed to polar residues. Positions D79–N99 are enriched in acidic residues. A Q motif motif is present at residues I119–A147. The Helicase ATP-binding domain maps to I150–Y325. Residue A163–T170 participates in ATP binding. The DEAD box signature appears at D273–D276. One can recognise a Helicase C-terminal domain in the interval G339 to V509. Residues S568–R602 form a disordered region. Residues N579–Y588 are compositionally biased toward polar residues. Residues P593 to R602 show a composition bias toward basic and acidic residues.

It belongs to the DEAD box helicase family. DDX18/HAS1 subfamily.

Its subcellular location is the nucleus. The protein resides in the nucleolus. It localises to the chromosome. It catalyses the reaction ATP + H2O = ADP + phosphate + H(+). In terms of biological role, ATP-binding RNA helicase which may be involved in the ribosome biogenesis. This chain is Probable ATP-dependent RNA helicase ddx18 (ddx18), found in Dictyostelium discoideum (Social amoeba).